The primary structure comprises 296 residues: ATP synthase gamma chain (296 aa).

It belongs to the ATPase gamma chain family. As to quaternary structure, F-type ATPases have 2 components, CF(1) - the catalytic core - and CF(0) - the membrane proton channel. CF(1) has five subunits: alpha(3), beta(3), gamma(1), delta(1), epsilon(1). CF(0) has three main subunits: a, b and c.

It is found in the cell inner membrane. Functionally, produces ATP from ADP in the presence of a proton gradient across the membrane. The gamma chain is believed to be important in regulating ATPase activity and the flow of protons through the CF(0) complex. The chain is ATP synthase gamma chain from Gluconobacter oxydans (strain 621H) (Gluconobacter suboxydans).